A 69-amino-acid chain; its full sequence is Regulatory protein MokC (69 aa).

Residues 24–44 (KAMIVALIVICITAVVAALVT) traverse the membrane as a helical segment.

The protein belongs to the Hok/Gef family.

Its subcellular location is the cell inner membrane. In terms of biological role, might be the toxic component of a type I toxin-antitoxin (TA) system. Regulatory peptide which completely overlaps hokC and enables hokC expression. The sequence is that of Regulatory protein MokC (mokC) from Escherichia coli (strain K12).